The chain runs to 715 residues: Glycine--tRNA ligase beta subunit (715 aa).

It belongs to the class-II aminoacyl-tRNA synthetase family. In terms of assembly, tetramer of two alpha and two beta subunits.

The protein resides in the cytoplasm. It catalyses the reaction tRNA(Gly) + glycine + ATP = glycyl-tRNA(Gly) + AMP + diphosphate. This Nitrosomonas eutropha (strain DSM 101675 / C91 / Nm57) protein is Glycine--tRNA ligase beta subunit.